We begin with the raw amino-acid sequence, 225 residues long: Small ribosomal subunit protein eS1 (225 aa).

It belongs to the eukaryotic ribosomal protein eS1 family.

The sequence is that of Small ribosomal subunit protein eS1 from Methanococcus maripaludis (strain DSM 14266 / JCM 13030 / NBRC 101832 / S2 / LL).